Reading from the N-terminus, the 238-residue chain is Cysteine-rich venom protein kaouthin-2 (238 aa).

Positions 1-19 (MIAFIVLLSLAAVLQQSSG) are cleaved as a signal peptide. A propeptide spanning residues 20–25 (TVDFAS) is cleaved from the precursor. One can recognise an SCP domain in the interval 38–164 (VDKHNALRRS…SSKYLYVCQY (127 aa)). Disulfide bonds link C75/C153, C92/C165, C148/C162, C184/C191, C187/C196, C200/C233, C209/C227, and C218/C231. A ShKT domain is found at 200 to 233 (CKHHNVFSNCQSLAKQNACQTEWMKSKCAASCFC).

Expressed by the venom gland.

The protein resides in the secreted. The sequence is that of Cysteine-rich venom protein kaouthin-2 from Naja kaouthia (Monocled cobra).